A 127-amino-acid polypeptide reads, in one-letter code: Holo-[acyl-carrier-protein] synthase (127 aa).

Residues aspartate 7 and glutamate 53 each coordinate Mg(2+).

This sequence belongs to the P-Pant transferase superfamily. AcpS family. Requires Mg(2+) as cofactor.

The protein localises to the cytoplasm. It carries out the reaction apo-[ACP] + CoA = holo-[ACP] + adenosine 3',5'-bisphosphate + H(+). Its function is as follows. Transfers the 4'-phosphopantetheine moiety from coenzyme A to a Ser of acyl-carrier-protein. This Herpetosiphon aurantiacus (strain ATCC 23779 / DSM 785 / 114-95) protein is Holo-[acyl-carrier-protein] synthase.